The primary structure comprises 321 residues: Porphobilinogen deaminase (321 aa).

Cys-246 is subject to S-(dipyrrolylmethanemethyl)cysteine.

Belongs to the HMBS family. In terms of assembly, monomer. Requires dipyrromethane as cofactor.

The catalysed reaction is 4 porphobilinogen + H2O = hydroxymethylbilane + 4 NH4(+). Its pathway is porphyrin-containing compound metabolism; protoporphyrin-IX biosynthesis; coproporphyrinogen-III from 5-aminolevulinate: step 2/4. Its function is as follows. Tetrapolymerization of the monopyrrole PBG into the hydroxymethylbilane pre-uroporphyrinogen in several discrete steps. This Helicobacter hepaticus (strain ATCC 51449 / 3B1) protein is Porphobilinogen deaminase.